The following is a 232-amino-acid chain: Uracil-DNA glycosylase (232 aa).

Catalysis depends on Asp-71, which acts as the Proton acceptor.

It belongs to the uracil-DNA glycosylase (UDG) superfamily. UNG family.

It is found in the cytoplasm. The catalysed reaction is Hydrolyzes single-stranded DNA or mismatched double-stranded DNA and polynucleotides, releasing free uracil.. Excises uracil residues from the DNA which can arise as a result of misincorporation of dUMP residues by DNA polymerase or due to deamination of cytosine. This is Uracil-DNA glycosylase from Azotobacter vinelandii (strain DJ / ATCC BAA-1303).